The sequence spans 398 residues: Cap-specific mRNA (nucleoside-2'-O-)-methyltransferase 1 (398 aa).

Residues 85–298 (QFSNRAGHKL…ERYLVCVDFL (214 aa)) form the RrmJ-type SAM-dependent 2'-O-MTase domain. G132 and D211 together coordinate S-adenosyl-L-methionine. Residue K252 is the Proton acceptor of the active site. The disordered stretch occupies residues 371 to 398 (LKAKETTTRTSAESDDSPLSSRESCKDG).

The catalysed reaction is a 5'-end (N(7)-methyl 5'-triphosphoguanosine)-ribonucleoside in mRNA + S-adenosyl-L-methionine = a 5'-end (N(7)-methyl 5'-triphosphoguanosine)-(2'-O-methyl-ribonucleoside) in mRNA + S-adenosyl-L-homocysteine + H(+). S-adenosyl-L-methionine-dependent methyltransferase that mediates RNA cap1 2'-O-ribose methylation to the 5'-cap structure of RNAs. Methylates the ribose of the first nucleotide of a m(7)GpppG-capped mRNA to produce m(7)GpppNmp (cap1). This is Cap-specific mRNA (nucleoside-2'-O-)-methyltransferase 1 from Leishmania braziliensis.